Here is a 104-residue protein sequence, read N- to C-terminus: Ig lambda-1 chain C region (104 aa).

Residues 6-99 (PSVTLFPPSS…EENTVEKSLS (94 aa)) form the Ig-like domain. A disulfide bridge connects residues cysteine 27 and cysteine 85.

This chain is Ig lambda-1 chain C region, found in Rattus norvegicus (Rat).